A 513-amino-acid polypeptide reads, in one-letter code: MEISWGRALWRNFLGQSPDWYKLALIIFLIVNPLIFLISPFVAGWLLVAEFIFTLAMALKCYPLLPGGLLAIEAVFIGMTSAEHVREEVAANLEVLLLLMFMVAGIYFMKQLLLFIFTRLLLSIRSKMLLSLSFCVAAAFLSAFLDALTVVAVVISVAVGFYGIYHRVASSRAEDTDLQDDSHIDKHYKVVLEQFRGFLRSLMMHAGVGTALGGVMTMVGEPQNLIIAKAAGWHFGDFFLRMSPVTVPVLICGLLTCLLVEKLRWFGYGETLPEKVREVLQQFDDQSRNQRTRQDKIRLIVQAIIGVWLVTALALHLAEVGLIGLSVIILATSLTGVTDEHAIGKAFTESLPFTALLTVFFSVVAVIIDQQLFSPIIQFVLQASEHAQLSLFYIFNGLLSSISDNVFVGTIYINEAKAAMESGAITLKQYELLAVAINTGTNLPSVATPNGQAAFLFLLTSALAPLIRLSYGRMVWMALPYTLVLTLVGLLCVEFTLAPVTEWFMQMGWIATL.

Helical transmembrane passes span 23–43 (LALI…PFVA), 52–72 (IFTL…LLAI), 97–117 (LLLM…LFIF), 120–140 (LLLS…AAAF), 144–164 (FLDA…FYGI), 202–222 (LMMH…VGEP), 238–258 (FFLR…LTCL), 303–323 (AIIG…VGLI), 348–368 (TESL…AVII), 391–411 (LFYI…VGTI), 447–467 (ATPN…APLI), and 475–495 (VWMA…CVEF).

Belongs to the NhaB Na(+)/H(+) (TC 2.A.34) antiporter family.

It is found in the cell inner membrane. The catalysed reaction is 2 Na(+)(in) + 3 H(+)(out) = 2 Na(+)(out) + 3 H(+)(in). Na(+)/H(+) antiporter that extrudes sodium in exchange for external protons. The polypeptide is Na(+)/H(+) antiporter NhaB (Escherichia coli O6:K15:H31 (strain 536 / UPEC)).